The following is a 242-amino-acid chain: Neuromodulin (242 aa).

Residues 1–242 (MLCCMRRTKQ…EEREADQEHA (242 aa)) form a disordered region. S-palmitoyl cysteine attachment occurs at residues cysteine 3 and cysteine 4. Basic and acidic residues predominate over residues 9 to 32 (KQVEKNDEDQKIEQDGIKPEDKAH). Positions 31 to 60 (AHKAATKIQASFRGHITRKKLKGEKKGDAP) constitute an IQ domain. Serine 41 carries the phosphoserine; by PHK and PKC modification. Over residues 66 to 84 (ANEKDEAAVAEGTEKKEGE) the composition is skewed to basic and acidic residues. Over residues 85 to 97 (GSTPAEAAPGAGP) the composition is skewed to low complexity. Serine 86 is subject to Phosphoserine. Over residues 98–118 (KPEEKTGKAGETPSEEKKGEG) the composition is skewed to basic and acidic residues. Positions 119–134 (APDAATEQAAPQAPAP) are enriched in low complexity. Residues 143-158 (ETESATKASTDNSPSS) are compositionally biased toward polar residues. Serine 155, serine 157, and serine 158 each carry phosphoserine. Positions 159-171 (KAEDAPAKEEPKQ) are enriched in basic and acidic residues. Over residues 172-204 (ADVPAAVTAAAATAPAAEDAAAMATAQPPTETA) the composition is skewed to low complexity. Residues serine 206 and serine 207 each carry the phosphoserine; by CK2 modification. Basic and acidic residues predominate over residues 209–242 (AEEKIEAVDETKPKDSARQDEGKGEEREADQEHA).

It belongs to the neuromodulin family. Identified in a complex containing FGFR4, NCAM1, CDH2, PLCG1, FRS2, SRC, SHC1, GAP43 and CTTN. Interacts (via IQ domain) with calmodulin. Binds calmodulin with a greater affinity in the absence of Ca(2+) than in its presence. Phosphorylated. Phosphorylation of this protein by a protein kinase C is specifically correlated with certain forms of synaptic plasticity. Post-translationally, palmitoylated by ZDHHC3. Palmitoylation is regulated by ARF6 and is essential for plasma membrane association and axonal and dendritic filopodia induction. Deacylated by LYPLA2.

It localises to the cell membrane. It is found in the cell projection. The protein localises to the growth cone membrane. The protein resides in the synapse. Its subcellular location is the filopodium membrane. It localises to the perikaryon. It is found in the dendrite. The protein localises to the axon. The protein resides in the cytoplasm. Functionally, this protein is associated with nerve growth. It is a major component of the motile 'growth cones' that form the tips of elongating axons. Plays a role in axonal and dendritic filopodia induction. This is Neuromodulin (GAP43) from Bos taurus (Bovine).